Reading from the N-terminus, the 95-residue chain is Aspartyl/glutamyl-tRNA(Asn/Gln) amidotransferase subunit C (95 aa).

It belongs to the GatC family. In terms of assembly, heterotrimer of A, B and C subunits.

The catalysed reaction is L-glutamyl-tRNA(Gln) + L-glutamine + ATP + H2O = L-glutaminyl-tRNA(Gln) + L-glutamate + ADP + phosphate + H(+). It catalyses the reaction L-aspartyl-tRNA(Asn) + L-glutamine + ATP + H2O = L-asparaginyl-tRNA(Asn) + L-glutamate + ADP + phosphate + 2 H(+). Functionally, allows the formation of correctly charged Asn-tRNA(Asn) or Gln-tRNA(Gln) through the transamidation of misacylated Asp-tRNA(Asn) or Glu-tRNA(Gln) in organisms which lack either or both of asparaginyl-tRNA or glutaminyl-tRNA synthetases. The reaction takes place in the presence of glutamine and ATP through an activated phospho-Asp-tRNA(Asn) or phospho-Glu-tRNA(Gln). This Bartonella quintana (strain Toulouse) (Rochalimaea quintana) protein is Aspartyl/glutamyl-tRNA(Asn/Gln) amidotransferase subunit C.